The sequence spans 389 residues: MSLPTNQLRLAMVAGEPSGDLLAASLLGGLQERLPASTRYYGIGGQRMLAHGFDSHWQMDKLTVRGYVEALGQIPEILRIRGELKRQLLAERPDAFIGVDAPDFNFSVEQAARDAGIPSIHFVCPSIWAWRGGRIKKIAKSVDHMLCLFPFEPAILDKAGVASTYVGHPLADEIPLEPDTHGARIALGLPADGPVIAVLPGSRRSEIGLIGPTFFAAMALMQQREPGVRFVMPAATPALRELLQPLVDAHPQLALTITDGRSQVAMTAADAILVKSGTVTLEAALLKKPMVISYKVPWLTGQIMRRQGYLPYVGLPNILAGRFVVPELLQHFATPEALADATLTQLRDDANRRTLTEVFTEMHLSLRQNTAAKAAEAVVRVLEQRRGRA.

It belongs to the LpxB family.

It carries out the reaction a lipid X + a UDP-2-N,3-O-bis[(3R)-3-hydroxyacyl]-alpha-D-glucosamine = a lipid A disaccharide + UDP + H(+). It participates in bacterial outer membrane biogenesis; LPS lipid A biosynthesis. Functionally, condensation of UDP-2,3-diacylglucosamine and 2,3-diacylglucosamine-1-phosphate to form lipid A disaccharide, a precursor of lipid A, a phosphorylated glycolipid that anchors the lipopolysaccharide to the outer membrane of the cell. This chain is Lipid-A-disaccharide synthase, found in Burkholderia ambifaria (strain ATCC BAA-244 / DSM 16087 / CCUG 44356 / LMG 19182 / AMMD) (Burkholderia cepacia (strain AMMD)).